A 471-amino-acid chain; its full sequence is MTPTSDATTMTTPAGAAAPRVGFVSLGCPKALTDSELILTQLSAEGYQTSKTFEGADLVIVNTCGFIDDAVRESLDTIGEALAENGKVIVTGCLGAKAGKDGGNLIQEVHPSVLAVTGPHATQEVMNAVHTHLPKPHDPFIDLVPGAFGEAGIKLTPRHYAYLKISEGCNHRCTFCIIPSMRGDLVSRPVGDVLKEARALFEGGVKELLVISQDTSAYGVDVKYRTGFWDGKPVKTRMLELVQTLAEIAEPYGAWVRLHYVYPYPSVDEIIPFMATGRVLPYLDVPFQHSHPDVLKRMKRPANGERNLERLQRWREICPDLVIRSTFIAGFPGETEQEFEHLLQFLREAQIDRAGCFAYSPVEGAAANEIPGMLPLEVREERRARFMAVAEEVSTARLQKRVGQTMQVLVDKSVGLGKKGGVGRSYADAPEIDGLVHLLPPEKASKTYKVGDFVKARIVGTQGHDLVGQPV.

Residues 19–134 (PRVGFVSLGC…VMNAVHTHLP (116 aa)) enclose the MTTase N-terminal domain. Positions 28, 64, 93, 169, 173, and 176 each coordinate [4Fe-4S] cluster. In terms of domain architecture, Radical SAM core spans 155 to 396 (LTPRHYAYLK…MAVAEEVSTA (242 aa)). The region spanning 399–471 (QKRVGQTMQV…QGHDLVGQPV (73 aa)) is the TRAM domain.

It belongs to the methylthiotransferase family. RimO subfamily. [4Fe-4S] cluster is required as a cofactor.

It is found in the cytoplasm. The catalysed reaction is L-aspartate(89)-[ribosomal protein uS12]-hydrogen + (sulfur carrier)-SH + AH2 + 2 S-adenosyl-L-methionine = 3-methylsulfanyl-L-aspartate(89)-[ribosomal protein uS12]-hydrogen + (sulfur carrier)-H + 5'-deoxyadenosine + L-methionine + A + S-adenosyl-L-homocysteine + 2 H(+). Functionally, catalyzes the methylthiolation of an aspartic acid residue of ribosomal protein uS12. In Delftia acidovorans (strain DSM 14801 / SPH-1), this protein is Ribosomal protein uS12 methylthiotransferase RimO.